Reading from the N-terminus, the 184-residue chain is UPF0316 protein BLi00691/BL01474 (184 aa).

3 consecutive transmembrane segments (helical) span residues 9–29, 41–61, and 67–87; these read GVIM…FLTL, LAAF…GLVL, and IQNV…GTKI.

The protein belongs to the UPF0316 family.

The protein resides in the cell membrane. The sequence is that of UPF0316 protein BLi00691/BL01474 from Bacillus licheniformis (strain ATCC 14580 / DSM 13 / JCM 2505 / CCUG 7422 / NBRC 12200 / NCIMB 9375 / NCTC 10341 / NRRL NRS-1264 / Gibson 46).